We begin with the raw amino-acid sequence, 122 residues long: Large ribosomal subunit protein uL14 (122 aa).

This sequence belongs to the universal ribosomal protein uL14 family. Part of the 50S ribosomal subunit. Forms a cluster with proteins L3 and L19. In the 70S ribosome, L14 and L19 interact and together make contacts with the 16S rRNA in bridges B5 and B8.

Binds to 23S rRNA. Forms part of two intersubunit bridges in the 70S ribosome. In Methylibium petroleiphilum (strain ATCC BAA-1232 / LMG 22953 / PM1), this protein is Large ribosomal subunit protein uL14.